The following is a 307-amino-acid chain: Ribonuclease Z (307 aa).

Residues His63, His65, Asp67, His68, His141, Asp208, and His266 each contribute to the Zn(2+) site. Asp67 functions as the Proton acceptor in the catalytic mechanism.

It belongs to the RNase Z family. As to quaternary structure, homodimer. Requires Zn(2+) as cofactor.

The enzyme catalyses Endonucleolytic cleavage of RNA, removing extra 3' nucleotides from tRNA precursor, generating 3' termini of tRNAs. A 3'-hydroxy group is left at the tRNA terminus and a 5'-phosphoryl group is left at the trailer molecule.. In terms of biological role, zinc phosphodiesterase, which displays some tRNA 3'-processing endonuclease activity. Probably involved in tRNA maturation, by removing a 3'-trailer from precursor tRNA. In Chlamydia pneumoniae (Chlamydophila pneumoniae), this protein is Ribonuclease Z.